The sequence spans 417 residues: Cobalamin binding intrinsic factor (417 aa).

The first 18 residues, 1–18, serve as a signal peptide directing secretion; sequence MAWFALYLLSLLWATAGT. Disulfide bonds link C26–C246, C103–C288, and C143–C182. A cob(II)alamin-binding site is contributed by D171. S191 is modified (phosphoserine). Residues D222 and Q270 each coordinate cob(II)alamin. N-linked (GlcNAc...) asparagine glycosylation is found at N311, N330, and N334. Residues 365-370 and 386-395 contribute to the cob(II)alamin site; these read SWGLVV and WQFLSGVTPL. Residue N413 is glycosylated (N-linked (GlcNAc...) asparagine).

It belongs to the eukaryotic cobalamin transport proteins family. Interacts with CUBN (via CUB domains). In terms of tissue distribution, gastric mucosa.

It localises to the secreted. Its function is as follows. Promotes absorption of the essential vitamin cobalamin (Cbl) in the ileum. After interaction with CUBN, the CBLIF-cobalamin complex is internalized via receptor-mediated endocytosis. In Homo sapiens (Human), this protein is Cobalamin binding intrinsic factor.